We begin with the raw amino-acid sequence, 533 residues long: Non-specific phospholipase C1 (533 aa).

Residues 1–22 form the signal peptide; it reads MAFRRVLTTVILFCYLLISSQS.

The protein belongs to the bacterial phospholipase C family. In terms of tissue distribution, expressed in roots, leaves, stems, flowers and siliques.

It localises to the secreted. In Arabidopsis thaliana (Mouse-ear cress), this protein is Non-specific phospholipase C1 (NPC1).